A 460-amino-acid polypeptide reads, in one-letter code: 3-isopropylmalate dehydratase large subunit (460 aa).

Residues Cys-338, Cys-398, and Cys-401 each coordinate [4Fe-4S] cluster.

This sequence belongs to the aconitase/IPM isomerase family. LeuC type 1 subfamily. As to quaternary structure, heterodimer of LeuC and LeuD. [4Fe-4S] cluster serves as cofactor.

The catalysed reaction is (2R,3S)-3-isopropylmalate = (2S)-2-isopropylmalate. It functions in the pathway amino-acid biosynthesis; L-leucine biosynthesis; L-leucine from 3-methyl-2-oxobutanoate: step 2/4. In terms of biological role, catalyzes the isomerization between 2-isopropylmalate and 3-isopropylmalate, via the formation of 2-isopropylmaleate. In Streptococcus thermophilus (strain CNRZ 1066), this protein is 3-isopropylmalate dehydratase large subunit.